The primary structure comprises 249 residues: MVVIEQKKRFALFLATCDSEFVKKTYGGYFNVFVSTFGEEGEQWDLFRVIDGQFPDENDLDKYDGFVISGSPHDAFGDADWIVKLCEVCQKLDHMKKKVLGICFGHQIITRVKGGKIGRALKGADMGLRSITIAKDNEKLRGYFGDVEVPASLAIIKCHQDEVLELPESATLLASSEVCNVEMFSIGDHFFCIQGHPEYNKEILFEIVDRVLNMKLMEQEFADKAKSTMETAQPDRILWQKLCKNFLKG.

One can recognise a Glutamine amidotransferase type-1 domain in the interval S19–M217. Catalysis depends on C103, which acts as the Nucleophile. Catalysis depends on residues H196 and E198.

The protein belongs to the peptidase C26 family.

The protein resides in the cytoplasm. It localises to the cytosol. It catalyses the reaction an S-[(1E)-1-(hydroxyimino)-omega-(methylsulfanyl)alkyl]-L-glutathione + H2O = an S-[(1E)-1-(hydroxyimino)-omega-(methylsulfanyl)alkyl]-L-cysteinylglycine + L-glutamate. The catalysed reaction is (E)-1-(glutathione-S-yl)-2-(1H-indol-3-yl)acetohydroximate + H2O = (E)-1-(glycyl-L-cystein-S-yl)-2-(1H-indol-3-yl)acetohydroximate + L-glutamate. It carries out the reaction 2-(glutathion-S-yl)-2-(1H-indol-3-yl)acetonitrile + H2O = 2-(glycyl-L-cystein-S-yl)-2-(1H-indol-3-yl)acetonitrile + L-glutamate. The enzyme catalyses (Z)-1-(glutathione-S-yl)-2-phenylacetohydroximate + H2O = (Z)-1-(glycyl-L-cystein-S-yl)-2-phenylacetohydroximate + L-glutamate. It functions in the pathway secondary metabolite biosynthesis. Involved in glucosinolate biosynthesis. Hydrolyzes the gamma-glutamyl peptide bond of several glutathione (GSH) conjugates to produce Cys-Gly conjugates related to glucosinolates. The gamma-Glu-Cys-Gly-GSH conjugates are the sulfur-donating molecule in glucosinolate biosynthesis. Can use the GSH conjugate of the camalexin intermediate IAN (GS-IAN) as substrate. Required for the biosynthesis of camalexin, a pathogen-inducible phytoalexin with antibacterial and antifungal properties. The chain is Gamma-glutamyl peptidase 3 from Arabidopsis thaliana (Mouse-ear cress).